A 399-amino-acid polypeptide reads, in one-letter code: Elongation factor Tu (399 aa).

Residues 10 to 209 (KPHVNIGTIG…AVDSYIPTPV (200 aa)) enclose the tr-type G domain. The interval 19 to 26 (GHVDHGKT) is G1. 19–26 (GHVDHGKT) is a GTP binding site. Position 26 (T26) interacts with Mg(2+). A G2 region spans residues 60–64 (GITIA). Positions 81–84 (DCPG) are G3. Residues 81–85 (DCPGH) and 136–139 (NKAD) contribute to the GTP site. Residues 136 to 139 (NKAD) form a G4 region. Residues 174–176 (SAL) are G5.

It belongs to the TRAFAC class translation factor GTPase superfamily. Classic translation factor GTPase family. EF-Tu/EF-1A subfamily. Monomer.

It is found in the cytoplasm. The enzyme catalyses GTP + H2O = GDP + phosphate + H(+). Functionally, GTP hydrolase that promotes the GTP-dependent binding of aminoacyl-tRNA to the A-site of ribosomes during protein biosynthesis. The sequence is that of Elongation factor Tu from Campylobacter fetus subsp. fetus (strain 82-40).